A 305-amino-acid chain; its full sequence is Translation initiation factor eIF2B subunit alpha (305 aa).

Lys-35 is modified (N6-acetyllysine).

Belongs to the eIF-2B alpha/beta/delta subunits family. Component of the translation initiation factor 2B (eIF2B) complex which is a heterodecamer of two sets of five different subunits: alpha, beta, gamma, delta and epsilon. Subunits alpha, beta and delta comprise a regulatory subcomplex and subunits epsilon and gamma comprise a catalytic subcomplex. Within the complex, the hexameric regulatory complex resides at the center, with the two heterodimeric catalytic subcomplexes bound on opposite sides.

Its subcellular location is the cytoplasm. It localises to the cytosol. Its activity is regulated as follows. Activated by the chemical integrated stress response (ISR) inhibitor ISRIB which stimulates guanine nucleotide exchange factor activity for both phosphorylated and unphosphorylated eIF2. Functionally, acts as a component of the translation initiation factor 2B (eIF2B) complex, which catalyzes the exchange of GDP for GTP on eukaryotic initiation factor 2 (eIF2) gamma subunit. Its guanine nucleotide exchange factor activity is repressed when bound to eIF2 complex phosphorylated on the alpha subunit, thereby limiting the amount of methionyl-initiator methionine tRNA available to the ribosome and consequently global translation is repressed. The polypeptide is Translation initiation factor eIF2B subunit alpha (EIF2B1) (Macaca fascicularis (Crab-eating macaque)).